A 319-amino-acid chain; its full sequence is Cobalamin biosynthesis protein CbiB (319 aa).

Transmembrane regions (helical) follow at residues 52 to 74 (IGGG…GVLA), 79 to 101 (IHPW…GRSL), 155 to 177 (GIIA…YKAV), 207 to 229 (YLPA…LSGW), and 296 to 318 (LMWV…LSGV).

This sequence belongs to the CobD/CbiB family.

The protein localises to the cell membrane. It participates in cofactor biosynthesis; adenosylcobalamin biosynthesis; adenosylcobalamin from cob(II)yrinate a,c-diamide: step 4/7. Its function is as follows. Converts cobyric acid to cobinamide by the addition of aminopropanol on the F carboxylic group. However, the true cosubstrate could be (R)-1-amino-2-propanol O-2-phosphate, leading to cobinamide phosphate. This Salmonella typhi protein is Cobalamin biosynthesis protein CbiB.